The following is a 159-amino-acid chain: Large ribosomal subunit protein uL15 (159 aa).

Over residues 21-34 the composition is skewed to basic residues; the sequence is LRPAPGAHKSKIRV. Residues 21-55 are disordered; the sequence is LRPAPGAHKSKIRVGRGEGSKGKTAGRGTKGSKAR.

It belongs to the universal ribosomal protein uL15 family. As to quaternary structure, part of the 50S ribosomal subunit.

Its function is as follows. Binds to the 23S rRNA. The polypeptide is Large ribosomal subunit protein uL15 (Frankia casuarinae (strain DSM 45818 / CECT 9043 / HFP020203 / CcI3)).